The chain runs to 570 residues: Conserved oligomeric Golgi complex subunit 8 (570 aa).

It belongs to the COG8 family. As to quaternary structure, component of the conserved oligomeric Golgi complex which is composed of eight different subunits and is required for normal Golgi morphology and localization.

The protein localises to the golgi apparatus membrane. Required for normal Golgi function. The sequence is that of Conserved oligomeric Golgi complex subunit 8 from Drosophila melanogaster (Fruit fly).